Here is a 111-residue protein sequence, read N- to C-terminus: UPF0145 protein RBAM_010660 (111 aa).

Belongs to the UPF0145 family.

The chain is UPF0145 protein RBAM_010660 from Bacillus velezensis (strain DSM 23117 / BGSC 10A6 / LMG 26770 / FZB42) (Bacillus amyloliquefaciens subsp. plantarum).